A 423-amino-acid chain; its full sequence is Glucose-1-phosphate adenylyltransferase (423 aa).

Residues Y98, G163, 178-179, and S189 each bind alpha-D-glucose 1-phosphate; that span reads EK.

Belongs to the bacterial/plant glucose-1-phosphate adenylyltransferase family. Homotetramer.

The catalysed reaction is alpha-D-glucose 1-phosphate + ATP + H(+) = ADP-alpha-D-glucose + diphosphate. It participates in glycan biosynthesis; glycogen biosynthesis. In terms of biological role, involved in the biosynthesis of ADP-glucose, a building block required for the elongation reactions to produce glycogen. Catalyzes the reaction between ATP and alpha-D-glucose 1-phosphate (G1P) to produce pyrophosphate and ADP-Glc. In Thermotoga sp. (strain RQ2), this protein is Glucose-1-phosphate adenylyltransferase.